The sequence spans 250 residues: 2,3-bisphosphoglycerate-dependent phosphoglycerate mutase (250 aa).

Residues 8-15 (RHGESKWN), 21-22 (TG), Arg-60, 87-90 (ERHY), Lys-98, 114-115 (RR), and 183-184 (GN) contribute to the substrate site. The Tele-phosphohistidine intermediate role is filled by His-9. The active-site Proton donor/acceptor is the Glu-87.

The protein belongs to the phosphoglycerate mutase family. BPG-dependent PGAM subfamily.

It carries out the reaction (2R)-2-phosphoglycerate = (2R)-3-phosphoglycerate. It participates in carbohydrate degradation; glycolysis; pyruvate from D-glyceraldehyde 3-phosphate: step 3/5. Catalyzes the interconversion of 2-phosphoglycerate and 3-phosphoglycerate. The chain is 2,3-bisphosphoglycerate-dependent phosphoglycerate mutase from Borrelia recurrentis (strain A1).